Consider the following 293-residue polypeptide: Small ribosomal subunit protein uS3 (293 aa).

The KH type-2 domain maps to 39-107 (VREYLKAKLK…PVAVNIEEVR (69 aa)). The tract at residues 210 to 293 (RNDLPAVETP…PATAADGKGE (84 aa)) is disordered. The segment covering 219 to 238 (PRPEEERRPRGPRRDGRPGG) has biased composition (basic and acidic residues).

This sequence belongs to the universal ribosomal protein uS3 family. Part of the 30S ribosomal subunit. Forms a tight complex with proteins S10 and S14.

Functionally, binds the lower part of the 30S subunit head. Binds mRNA in the 70S ribosome, positioning it for translation. This is Small ribosomal subunit protein uS3 from Paracidovorax citrulli (strain AAC00-1) (Acidovorax citrulli).